The chain runs to 189 residues: Chitin synthase 2 (189 aa).

It belongs to the chitin synthase family. Class II subfamily.

It localises to the cell membrane. It catalyses the reaction [(1-&gt;4)-N-acetyl-beta-D-glucosaminyl](n) + UDP-N-acetyl-alpha-D-glucosamine = [(1-&gt;4)-N-acetyl-beta-D-glucosaminyl](n+1) + UDP + H(+). Its function is as follows. Polymerizes chitin, a structural polymer of the cell wall and septum, by transferring the sugar moiety of UDP-GlcNAc to the non-reducing end of the growing chitin polymer. This Xylohypha bantiana protein is Chitin synthase 2 (CHS2).